The chain runs to 496 residues: MLRNSDIKMDFNFLWLILAIFVGTYVVLFGFLRRVNDWYYVSRLGEKRHSLPPGEMGWPLLGNMLSFIRAFRTSDPDTFIYNLVDRYGRTGIYKSHLFWSPSIVVCTPETCKTVLMDNERFGRGNPESTKELLGKKTLGLSNEEHKRLRKLTTNPFRGDKALTMYVGYIEDIVIDLLDEWAGMNKHLVFLTEMRKLAFKVIGHIVFGTTSDHLLELMEKYYTDLLLGLRSPAINIPGFAFYRALKARKLLVKLLQDVLDERKKLSGIEQQKGKKGMIDLLIEAEDENGKKLEDDNIIDLLIINLLAGHESSAHASMWAVLYLYQHPEMLQKAKEEQEEIIKRRPSTQKGLTLEEIKQMEYLSKIIDETMRRTSLFIPIFREAKTDAKIQGYTVPKGWQVLVWTRGVHMDPEVYSNPKEFDPSRWDNHAPKPGSYIPFGGGPWICSGADLTKLEIYIFLHYFLLNYKLELLNPKCPVAYLPVPRPSDNCVAKVVKLK.

Residues 11–31 traverse the membrane as a helical segment; sequence FNFLWLILAIFVGTYVVLFGF. Residue Cys-444 participates in heme binding.

Belongs to the cytochrome P450 family. The cofactor is heme.

The protein resides in the membrane. The enzyme catalyses melianol + reduced [NADPH--hemoprotein reductase] + O2 = 7,8-epoxymelianol + oxidized [NADPH--hemoprotein reductase] + H2O + H(+). It functions in the pathway secondary metabolite biosynthesis; terpenoid biosynthesis. In terms of biological role, monooxygenase involved in the biosynthesis of glabretanes, limonoids and quassinoids triterpene natural products such as ailanthone, chaparrinone, glaucarubinone and amarolide, allelopathic degraded triterpene lactones inhibiting the growth of other plants, and possessing antimalarial, antifeedant, insecticidal, anti-inflammatory and anticancer activities. Catalyzes the epoxidation of melianol to produce 7,8-epoxymelianol. In Ailanthus altissima (Tree-of-heaven), this protein is 7,8-epoxymelianol synthase CYP88A154.